A 392-amino-acid polypeptide reads, in one-letter code: CD2 homolog (392 aa).

Positions 1–16 (MIIKLIFLICFKIVLS) are cleaved as a signal peptide. Over 17–222 (IDNKTKFNET…YLDFFQVTSY (206 aa)) the chain is Extracellular. N-linked (GlcNAc...) asparagine; by host glycans are attached at residues Asn-39, Asn-88, Asn-92, Asn-106, Asn-148, Asn-159, Asn-183, Asn-191, Asn-198, and Asn-204. Cystine bridges form between Cys-137-Cys-205 and Cys-144-Cys-188. A helical transmembrane segment spans residues 223 to 243 (IFYMIIFIVTGITVSILISII). At 244-392 (TFLFIRKRKH…ISLIHVDRII (149 aa)) the chain is on the cytoplasmic side. A disordered region spans residues 258–290 (ESPPPESNEEEQQCHHDTTSIHEPSPREPLLPK). Over residues 269 to 283 (QQCHHDTTSIHEPSP) the composition is skewed to basic and acidic residues. 5 tandem repeats follow at residues 319-324 (KPCPPP), 325-330 (KPCPPP), 331-336 (KPCPPP), 337-342 (KPCPPS), and 343-348 (KPCPPP). The tract at residues 319–348 (KPCPPPKPCPPPKPCPPPKPCPPSKPCPPP) is 5 X 6 AA tandem repeats of K-P-C-[PRS]-[P]-[PS]. The disordered stretch occupies residues 328 to 357 (PPPKPCPPPKPCPPSKPCPPPEPYSPPKPC).

It belongs to the asfivirus CD2 homolog protein family. As to quaternary structure, both glycosylated and nonglycosylated forms interact (via C-terminus) with the host AP-1 complex. Post-translationally, cleaved into two fragments of 63 kDa and 26 kDa containing respectively the glycosylated N-terminus and the nonglycosylated C-terminus. A full-length 89-kDa glycosylated form also exists.

It is found in the host cell membrane. It localises to the virion membrane. The protein resides in the host Golgi apparatus. In terms of biological role, may play an immunosuppressive role by inhibiting lymphocyte proliferation and subsequently facilitating viral replication and generalization of infection. Responsible for viral hemadsorption, which may help viral spread. Increases virus replication in the tick vector at the step of virus uptake or replication in the tick gut. May play a role in the host Golgi reorganization to yield viral factories. May play a role in host cell penetration. This Ornithodoros (relapsing fever ticks) protein is CD2 homolog.